We begin with the raw amino-acid sequence, 363 residues long: 3,4-dihydroxy-2-butanone 4-phosphate synthase (363 aa).

Residues 1–202 form a DHBP synthase region; it reads MSHISPIPEI…IADLIEYRSR (202 aa). Residues 28–29, Asp33, 141–145, and Glu165 contribute to the D-ribulose 5-phosphate site; these read RE and RAGHT. Position 29 (Glu29) interacts with Mg(2+). Residue His144 participates in Mg(2+) binding. Positions 205 to 363 are GTP cyclohydrolase II-like; the sequence is SLLEDMGNAP…EVVGFEEAEK (159 aa).

The protein in the N-terminal section; belongs to the DHBP synthase family. This sequence in the C-terminal section; belongs to the GTP cyclohydrolase II family. It depends on Mg(2+) as a cofactor. Mn(2+) serves as cofactor.

The enzyme catalyses D-ribulose 5-phosphate = (2S)-2-hydroxy-3-oxobutyl phosphate + formate + H(+). The protein operates within cofactor biosynthesis; riboflavin biosynthesis; 2-hydroxy-3-oxobutyl phosphate from D-ribulose 5-phosphate: step 1/1. Its function is as follows. Catalyzes the conversion of D-ribulose 5-phosphate to formate and 3,4-dihydroxy-2-butanone 4-phosphate. The chain is 3,4-dihydroxy-2-butanone 4-phosphate synthase (ribB) from Neisseria meningitidis serogroup B (strain ATCC BAA-335 / MC58).